Here is a 643-residue protein sequence, read N- to C-terminus: Extracellular metalloproteinase 4 (643 aa).

An N-terminal signal peptide occupies residues 1 to 18; that stretch reads MHGLLLAGLLALPLNVLA. Residues 19-254 constitute a propeptide that is removed on maturation; it reads HPTESHSSGI…VHSVVDYVSA (236 aa). The segment covering 47–57 has biased composition (basic and acidic residues); sequence TKSDAVPKQDD. The interval 47 to 71 is disordered; sequence TKSDAVPKQDDESFTTSSTGDDNVS. The span at 60 to 71 shows a compositional bias: polar residues; the sequence is FTTSSTGDDNVS. Residues Asn271 and Asn420 are each glycosylated (N-linked (GlcNAc...) asparagine). A Zn(2+)-binding site is contributed by His437. The active site involves Glu438. His441 is a Zn(2+) binding site. 2 N-linked (GlcNAc...) asparagine glycosylation sites follow: Asn510 and Asn553.

Belongs to the peptidase M36 family. The cofactor is Zn(2+).

Its subcellular location is the secreted. Its function is as follows. Secreted metalloproteinase probably acting as a virulence factor. This chain is Extracellular metalloproteinase 4 (MEP4), found in Arthroderma benhamiae (Trichophyton mentagrophytes).